The following is a 405-amino-acid chain: MLQRCIKCGKTYDVDEIIYTCECGGLLEIIYDYEEIKDKVSEEKLRKREIGVWRYLEYLPVKDESKIVSLCEGGTPLYRCNNLEKELGIKELYVKNEGANPTGSFKDRGMTVGVTRANELGVEVVGCASTGNTSASLAAYSARSGKKCIVLLPEGKVALGKLAQAMFYGAKVIQVKGNFDDALDMVKQLAKEKLIYLLNSINPFRLEGQKTIAFEICDQLNWQVPDRVIVPVGNAGNISAIWKGFKEFEITGIIDELPKMTGIQADGAKPIVEAFRKRAKDIIPYKNPETIATAIRIGNPVNAPKALDAIYSSGGYAEAVTDEEIVEAQKLLARKEGIFVEPASASSIAGLKKLLEEGIIDRDERIVCITTGHGLKDPDAAIRASEEPIKIECDMNVLKRILKEL.

The residue at position 106 (Lys-106) is an N6-(pyridoxal phosphate)lysine. Pyridoxal 5'-phosphate is bound by residues Asn-132, 233–237, and Thr-371; that span reads GNAGN.

Belongs to the threonine synthase family. Pyridoxal 5'-phosphate is required as a cofactor.

It carries out the reaction O-phospho-L-homoserine + H2O = L-threonine + phosphate. Its pathway is amino-acid biosynthesis; L-threonine biosynthesis; L-threonine from L-aspartate: step 5/5. Catalyzes the gamma-elimination of phosphate from L-phosphohomoserine and the beta-addition of water to produce L-threonine. This chain is Threonine synthase (thrC), found in Methanocaldococcus jannaschii (strain ATCC 43067 / DSM 2661 / JAL-1 / JCM 10045 / NBRC 100440) (Methanococcus jannaschii).